The sequence spans 104 residues: A-type ATP synthase subunit F (104 aa).

The protein belongs to the V-ATPase F subunit family. As to quaternary structure, has multiple subunits with at least A(3), B(3), C, D, E, F, H, I and proteolipid K(x).

It localises to the cell membrane. Its function is as follows. Component of the A-type ATP synthase that produces ATP from ADP in the presence of a proton gradient across the membrane. The sequence is that of A-type ATP synthase subunit F from Thermoplasma acidophilum (strain ATCC 25905 / DSM 1728 / JCM 9062 / NBRC 15155 / AMRC-C165).